Consider the following 67-residue polypeptide: MKTNELRDMTDVELNQKLSDLKSELFNLRFQLATGQLENPLRIRNVRKDIARLKTILRENELKQVRA.

This sequence belongs to the universal ribosomal protein uL29 family.

This is Large ribosomal subunit protein uL29 from Alkaliphilus metalliredigens (strain QYMF).